Reading from the N-terminus, the 473-residue chain is Knob-associated histidine-rich protein (473 aa).

Residues 1–34 (MKSFKNKNTLRRKKAFPVFTKILLVSFLVWVLKC) form the signal peptide. Asparagine 42 carries N-linked (GlcNAc...) asparagine glycosylation. Residues 57-87 (AQKQHEHHHHHHHQHQHQHQAPHQAHHHHHH) show a composition bias toward basic residues. 2 disordered regions span residues 57–143 (AQKQ…QVFR) and 347–473 (SSVN…DGSK). Residues 95-104 (PQVHQQVHGQ) are compositionally biased toward low complexity. The span at 108-117 (HHHHHHHHHQ) shows a compositional bias: basic residues. Composition is skewed to basic and acidic residues over residues 354–375 (KHGD…EGEK) and 396–405 (KDNEDAESVK). The segment covering 406-422 (SKKHKSHDCEKKKSKKH) has biased composition (basic residues). Basic and acidic residues-rich tracts occupy residues 423-444 (KDNE…GEKH) and 453-473 (KTNE…DGSK).

It localises to the secreted. Its function is as follows. KAHRP might mimick human histidine-rich glycoproteins to anchor host thrombospondin or a parasite analog in a binding complex with the endothelial cell receptor. In Plasmodium falciparum, this protein is Knob-associated histidine-rich protein.